The chain runs to 520 residues: MPGSLPLNAEACWPKDVGIVALEIYFPSQYVDQAELEKYDGVAAGKYTIGLGQAKMGFCTDREDINSLCMTVVQNLMERNNLSYDCIGRLEVGTETIIDKSKSVKTNLMQLFEESGNTDIEGIDTTNACYGGTAAVFNAVNWIESSSWDGRYALVVAGDIAVYATGNARPTGGVGAVALLIGPNAPLIFERGLRGTHMQHAYDFYKPDMLSEYPIVDGKLSIQCYLSALDRCYSVYCKKIRAQWQKEGNDKDFTLNDFGFMIFHSPYCKLVQKSLARMLLNDFLNDQNRDKNSIYSGLEAFGDVKLEDTYFDRDVEKAFMKASSELFSQKTKASLLVSNQNGNMYTSSVYGSLASVLAQYSPQQLAGKRIGVFSYGSGLAATLYSLKVTQDATPGSALDKITASLCDLKSRLDSRTGVAPDVFAENMKLREDTHHLVNYIPQGSIDSLFEGTWYLVRVDEKHRRTYARRPTPNDDTLDEGVGLVHSNIATEHIPSPAKKVPRLPATAAEPEAAVISNGEH.

Serine 4 is modified (phosphoserine). Alanine 44 provides a ligand contact to (3S)-3-hydroxy-3-methylglutaryl-CoA. CoA is bound at residue 44–46; it reads AGK. Lysine 46 carries the N6-acetyllysine modification. Glutamate 95 acts as the Proton donor/acceptor in catalysis. Residues cysteine 129, asparagine 167, threonine 171, serine 221, and histidine 264 each coordinate (3S)-3-hydroxy-3-methylglutaryl-CoA. Cysteine 129 serves as the catalytic Acyl-thioester intermediate. Asparagine 167 serves as a coordination point for CoA. Serine 221 is a binding site for CoA. Histidine 264 serves as the catalytic Proton donor/acceptor. Positions 269 and 273 each coordinate CoA. (3S)-3-hydroxy-3-methylglutaryl-CoA contacts are provided by lysine 273, asparagine 343, and serine 377. An N6-acetyllysine modification is found at lysine 273. At threonine 476 the chain carries Phosphothreonine. Residues 492 to 520 are disordered; the sequence is HIPSPAKKVPRLPATAAEPEAAVISNGEH. Phosphoserine occurs at positions 495 and 516.

This sequence belongs to the thiolase-like superfamily. HMG-CoA synthase family. Homodimer.

It is found in the cytoplasm. It catalyses the reaction acetoacetyl-CoA + acetyl-CoA + H2O = (3S)-3-hydroxy-3-methylglutaryl-CoA + CoA + H(+). It participates in metabolic intermediate biosynthesis; (R)-mevalonate biosynthesis; (R)-mevalonate from acetyl-CoA: step 2/3. Catalyzes the condensation of acetyl-CoA with acetoacetyl-CoA to form HMG-CoA, which is converted by HMG-CoA reductase (HMGCR) into mevalonate, a precursor for cholesterol synthesis. The sequence is that of Hydroxymethylglutaryl-CoA synthase, cytoplasmic from Pongo abelii (Sumatran orangutan).